Reading from the N-terminus, the 376-residue chain is Mannosyl phosphorylinositol ceramide synthase CSH1 (376 aa).

2 helical membrane passes run 7–27 and 274–294; these read ILIIANIALLISIIHYTFDLL and ILSCVVTGFIFGFFILYGEFT. Positions 331–351 are disordered; the sequence is NKEKRRNPTRHEYNSRGKRLR. Phosphoserine is present on serine 354.

This sequence belongs to the glycosyltransferase 32 family. As to quaternary structure, heterodimer of CSH1 and CSG2.

It is found in the vacuole membrane. It carries out the reaction a 1D-myo-inositol-1-phospho-N-[(R)-2-hydroxy-very-long-chain fatty acyl]-(R)-4-hydroxysphingoid base + GDP-alpha-D-mannose = an alpha-D-mannosyl-(1&lt;-&gt;6)-1D-myo-inositol-1-phospho-N-[(R)-2-hydroxy-very-long-chain fatty acyl]-(R)-4-hydroxysphingoid base + GDP + H(+). Functionally, involved in the synthesis of mannosyl phosphorylinositol ceramide. Catalyzes the addition of mannosyl to phosphorylinositol ceramide. The protein is Mannosyl phosphorylinositol ceramide synthase CSH1 of Saccharomyces cerevisiae (strain ATCC 204508 / S288c) (Baker's yeast).